The chain runs to 87 residues: Exodeoxyribonuclease 7 small subunit (87 aa).

This sequence belongs to the XseB family. In terms of assembly, heterooligomer composed of large and small subunits.

Its subcellular location is the cytoplasm. It catalyses the reaction Exonucleolytic cleavage in either 5'- to 3'- or 3'- to 5'-direction to yield nucleoside 5'-phosphates.. In terms of biological role, bidirectionally degrades single-stranded DNA into large acid-insoluble oligonucleotides, which are then degraded further into small acid-soluble oligonucleotides. The protein is Exodeoxyribonuclease 7 small subunit of Halorhodospira halophila (strain DSM 244 / SL1) (Ectothiorhodospira halophila (strain DSM 244 / SL1)).